Consider the following 267-residue polypeptide: tRNA pseudouridine synthase A (267 aa).

Asp54 functions as the Nucleophile in the catalytic mechanism. Substrate is bound at residue Tyr114.

Belongs to the tRNA pseudouridine synthase TruA family. As to quaternary structure, homodimer.

The catalysed reaction is uridine(38/39/40) in tRNA = pseudouridine(38/39/40) in tRNA. Functionally, formation of pseudouridine at positions 38, 39 and 40 in the anticodon stem and loop of transfer RNAs. In Tropheryma whipplei (strain Twist) (Whipple's bacillus), this protein is tRNA pseudouridine synthase A.